We begin with the raw amino-acid sequence, 523 residues long: Acetyl-CoA hydrolase (523 aa).

277 to 281 lines the CoA pocket; the sequence is GIGNI. Glu302 functions as the 5-glutamyl coenzyme A thioester intermediate in the catalytic mechanism. Asn392 and Gly396 together coordinate CoA.

This sequence belongs to the acetyl-CoA hydrolase/transferase family.

The protein resides in the cytoplasm. It catalyses the reaction acetyl-CoA + H2O = acetate + CoA + H(+). Functionally, presumably involved in regulating the intracellular acetyl-CoA pool for fatty acid and cholesterol synthesis and fatty acid oxidation. The chain is Acetyl-CoA hydrolase (ACH1) from Eremothecium gossypii (strain ATCC 10895 / CBS 109.51 / FGSC 9923 / NRRL Y-1056) (Yeast).